Here is a 153-residue protein sequence, read N- to C-terminus: SsrA-binding protein (153 aa).

This sequence belongs to the SmpB family.

It localises to the cytoplasm. Required for rescue of stalled ribosomes mediated by trans-translation. Binds to transfer-messenger RNA (tmRNA), required for stable association of tmRNA with ribosomes. tmRNA and SmpB together mimic tRNA shape, replacing the anticodon stem-loop with SmpB. tmRNA is encoded by the ssrA gene; the 2 termini fold to resemble tRNA(Ala) and it encodes a 'tag peptide', a short internal open reading frame. During trans-translation Ala-aminoacylated tmRNA acts like a tRNA, entering the A-site of stalled ribosomes, displacing the stalled mRNA. The ribosome then switches to translate the ORF on the tmRNA; the nascent peptide is terminated with the 'tag peptide' encoded by the tmRNA and targeted for degradation. The ribosome is freed to recommence translation, which seems to be the essential function of trans-translation. The sequence is that of SsrA-binding protein from Lactobacillus delbrueckii subsp. bulgaricus (strain ATCC 11842 / DSM 20081 / BCRC 10696 / JCM 1002 / NBRC 13953 / NCIMB 11778 / NCTC 12712 / WDCM 00102 / Lb 14).